A 219-amino-acid chain; its full sequence is Carboxypeptidase Y inhibitor (219 aa).

Met1 bears the N-acetylmethionine mark.

It belongs to the phosphatidylethanolamine-binding protein family. In terms of assembly, monomer.

It localises to the cytoplasm. Specific and potent inhibitor of carboxypeptidase Y. The protein is Carboxypeptidase Y inhibitor (TFS1) of Saccharomyces cerevisiae (strain ATCC 204508 / S288c) (Baker's yeast).